We begin with the raw amino-acid sequence, 165 residues long: MFLTVKLLLGRRCSLKVSGQESVAMLKKLVSERLHVPEEQQHLLFRGQLLADDKRLSDYRIGPNASISVVVRPLEKPAPEDTRLPQPLWHHLGQVLAKHFGPQDTEAMLQLLRREHEECLQRISLGDLEQLARYLLTKEPLAQPTGEREPEVLSPNKEEEKEAVQ.

The region spanning 1–76 (MFLTVKLLLG…ISVVVRPLEK (76 aa)) is the Ubiquitin-like domain. The tract at residues 139–165 (EPLAQPTGEREPEVLSPNKEEEKEAVQ) is disordered. Positions 146–165 (GEREPEVLSPNKEEEKEAVQ) are enriched in basic and acidic residues.

Its subcellular location is the cytoplasm. This Bos taurus (Bovine) protein is Ubiquitin-like protein 4B (UBL4B).